We begin with the raw amino-acid sequence, 279 residues long: Urease accessory protein UreD (279 aa).

This sequence belongs to the UreD family. UreD, UreF and UreG form a complex that acts as a GTP-hydrolysis-dependent molecular chaperone, activating the urease apoprotein by helping to assemble the nickel containing metallocenter of UreC. The UreE protein probably delivers the nickel.

The protein resides in the cytoplasm. Required for maturation of urease via the functional incorporation of the urease nickel metallocenter. The chain is Urease accessory protein UreD from Rhodopseudomonas palustris (strain HaA2).